We begin with the raw amino-acid sequence, 293 residues long: NAD kinase (293 aa).

The active-site Proton acceptor is aspartate 73. NAD(+) is bound by residues 73–74 (DG), 147–148 (NE), arginine 175, aspartate 177, and 188–193 (TAYSMS).

This sequence belongs to the NAD kinase family. A divalent metal cation is required as a cofactor.

The protein localises to the cytoplasm. It catalyses the reaction NAD(+) + ATP = ADP + NADP(+) + H(+). Functionally, involved in the regulation of the intracellular balance of NAD and NADP, and is a key enzyme in the biosynthesis of NADP. Catalyzes specifically the phosphorylation on 2'-hydroxyl of the adenosine moiety of NAD to yield NADP. This is NAD kinase from Colwellia psychrerythraea (strain 34H / ATCC BAA-681) (Vibrio psychroerythus).